A 329-amino-acid polypeptide reads, in one-letter code: Glycerol-3-phosphate dehydrogenase [NAD(P)+] (329 aa).

Tryptophan 15, histidine 35, and lysine 107 together coordinate NADPH. Residues lysine 107, glycine 135, and serine 137 each coordinate sn-glycerol 3-phosphate. NADPH is bound at residue alanine 139. Sn-glycerol 3-phosphate is bound by residues lysine 190, aspartate 243, serine 253, arginine 254, and asparagine 255. The Proton acceptor role is filled by lysine 190. NADPH is bound at residue arginine 254. The NADPH site is built by leucine 276 and glutamate 278.

Belongs to the NAD-dependent glycerol-3-phosphate dehydrogenase family.

It is found in the cytoplasm. The catalysed reaction is sn-glycerol 3-phosphate + NAD(+) = dihydroxyacetone phosphate + NADH + H(+). The enzyme catalyses sn-glycerol 3-phosphate + NADP(+) = dihydroxyacetone phosphate + NADPH + H(+). It participates in membrane lipid metabolism; glycerophospholipid metabolism. Catalyzes the reduction of the glycolytic intermediate dihydroxyacetone phosphate (DHAP) to sn-glycerol 3-phosphate (G3P), the key precursor for phospholipid synthesis. In Rhodopseudomonas palustris (strain BisB5), this protein is Glycerol-3-phosphate dehydrogenase [NAD(P)+].